The chain runs to 350 residues: MSTVQTVLGTITPNLLGRTLTHEHVALDFEHFYRPPPPDFESELKAKISMSTLGYVRLYPYSSKENVRFYDEEALEAAKKDVLLYKKHGGGSIVENSSYGLKRNLEFIVELAKSTGVHFIAGTGHYIHAMQDASHASLTVEQMSDLYSKDIITGQQVNGQMVKCGFIGEVASVYPIHDFEKNAIKAAGEIQEVLGCGVSMHPHRVTKAPFEIMRLYLEAGGRADKCVMSHLDRTIFDIDELLEFAKLGCYIQYDLFGTECSFYQLNTSVDMISDGQRIDNLIKLIKEGLVDKLLMSHDIHTKHRLTSYGGHGYHHIHTNILPRMFDRGVTLEQVEQMTVTNPANWLAFDP.

Residues H22, H24, E169, H201, H230, and D298 each contribute to the a divalent metal cation site.

It belongs to the metallo-dependent hydrolases superfamily. Phosphotriesterase family. It depends on a divalent metal cation as a cofactor.

In Drosophila yakuba (Fruit fly), this protein is Phosphotriesterase-related protein.